The sequence spans 644 residues: Cyclin-dependent kinase C-2 C (644 aa).

The Protein kinase domain occupies 105 to 389 (FQKLEKIGQG…ASSALNSEYF (285 aa)). ATP-binding positions include 111–119 (IGQGTYSSV) and Lys134. Tyr116 carries the post-translational modification Phosphotyrosine. Asp229 (proton acceptor) is an active-site residue. The residue at position 263 (Thr263) is a Phosphothreonine. The Nuclear localization signal motif lies at 420–427 (RKRANLKL). Over residues 565 to 576 (SKLSRIGERHGS) the composition is skewed to basic and acidic residues. Positions 565 to 591 (SKLSRIGERHGSLDGSGLDFSQREEDS) are disordered.

It belongs to the protein kinase superfamily. CMGC Ser/Thr protein kinase family. CDC2/CDKX subfamily. In terms of processing, autophosphorylated. As to expression, expressed specifically in flowers and pollen.

The protein localises to the nucleus. This is Cyclin-dependent kinase C-2 C from Arabidopsis thaliana (Mouse-ear cress).